A 155-amino-acid polypeptide reads, in one-letter code: Peptidyl-prolyl cis-trans isomerase ppi1 (155 aa).

The 154-residue stretch at 1 to 154 (MANVELQTSL…EPLKIIKAVA (154 aa)) folds into the PPIase cyclophilin-type domain.

It belongs to the cyclophilin-type PPIase family. PPIL1 subfamily. In terms of assembly, interacts with cwf13/snw1.

The enzyme catalyses [protein]-peptidylproline (omega=180) = [protein]-peptidylproline (omega=0). Its function is as follows. PPIases accelerate the folding of proteins. It catalyzes the cis-trans isomerization of proline imidic peptide bonds in oligopeptides. In Schizosaccharomyces pombe (strain 972 / ATCC 24843) (Fission yeast), this protein is Peptidyl-prolyl cis-trans isomerase ppi1 (ppi1).